The sequence spans 202 residues: Small ribosomal subunit protein uS5 (202 aa).

The S5 DRBM domain maps to 50–113 (LKQELLNLNL…REAKLNITPV (64 aa)).

The protein belongs to the universal ribosomal protein uS5 family. Part of the 30S ribosomal subunit. Contacts protein S4.

In terms of biological role, with S4 and S12 plays an important role in translational accuracy. The polypeptide is Small ribosomal subunit protein uS5 (Pyrobaculum calidifontis (strain DSM 21063 / JCM 11548 / VA1)).